Here is a 423-residue protein sequence, read N- to C-terminus: AP-1 complex subunit mu-2 (423 aa).

The MHD domain occupies 168 to 421 (KNEVFIDVIE…ITQSGDYQLR (254 aa)).

This sequence belongs to the adaptor complexes medium subunit family. Adaptor protein complex 1 (AP-1) is a heterotetramer composed of two large adaptins (gamma-type subunit AP1G1 and beta-type subunit AP1B1), a medium adaptin (mu-type subunit AP1M1 or AP1M2) and a small adaptin (sigma-type subunit AP1S1 or AP1S2 or AP1S3). Interacts with P2X4. Post-translationally, phosphorylation of membrane-bound AP1M1/AP1M2 increases its affinity for sorting signals.

The protein localises to the golgi apparatus. It is found in the cytoplasmic vesicle. It localises to the clathrin-coated vesicle membrane. Subunit of clathrin-associated adaptor protein complex 1 that plays a role in protein sorting in the trans-Golgi network (TGN) and endosomes. The AP complexes mediate the recruitment of clathrin to membranes and the recognition of sorting signals within the cytosolic tails of transmembrane cargo molecules. This is AP-1 complex subunit mu-2 (Ap1m2) from Mus musculus (Mouse).